Here is a 139-residue protein sequence, read N- to C-terminus: Putative pre-16S rRNA nuclease (139 aa).

Belongs to the YqgF nuclease family.

The protein resides in the cytoplasm. Could be a nuclease involved in processing of the 5'-end of pre-16S rRNA. This Photorhabdus laumondii subsp. laumondii (strain DSM 15139 / CIP 105565 / TT01) (Photorhabdus luminescens subsp. laumondii) protein is Putative pre-16S rRNA nuclease.